Here is a 93-residue protein sequence, read N- to C-terminus: Putative pterin-4-alpha-carbinolamine dehydratase (93 aa).

It belongs to the pterin-4-alpha-carbinolamine dehydratase family.

The enzyme catalyses (4aS,6R)-4a-hydroxy-L-erythro-5,6,7,8-tetrahydrobiopterin = (6R)-L-erythro-6,7-dihydrobiopterin + H2O. The protein is Putative pterin-4-alpha-carbinolamine dehydratase of Trichodesmium erythraeum (strain IMS101).